The following is a 194-amino-acid chain: Peptidyl-tRNA hydrolase (194 aa).

Y17 is a tRNA binding site. H22 serves as the catalytic Proton acceptor. Residues Y68, N70, and N116 each coordinate tRNA.

Belongs to the PTH family. In terms of assembly, monomer.

The protein resides in the cytoplasm. The catalysed reaction is an N-acyl-L-alpha-aminoacyl-tRNA + H2O = an N-acyl-L-amino acid + a tRNA + H(+). Its function is as follows. Hydrolyzes ribosome-free peptidyl-tRNAs (with 1 or more amino acids incorporated), which drop off the ribosome during protein synthesis, or as a result of ribosome stalling. Catalyzes the release of premature peptidyl moieties from peptidyl-tRNA molecules trapped in stalled 50S ribosomal subunits, and thus maintains levels of free tRNAs and 50S ribosomes. The sequence is that of Peptidyl-tRNA hydrolase from Pseudomonas entomophila (strain L48).